We begin with the raw amino-acid sequence, 162 residues long: 2-C-methyl-D-erythritol 2,4-cyclodiphosphate synthase (162 aa).

Residues Asp10 and His12 each coordinate a divalent metal cation. 4-CDP-2-C-methyl-D-erythritol 2-phosphate-binding positions include 10-12 (DVH) and 36-37 (HS). His44 lines the a divalent metal cation pocket. 4-CDP-2-C-methyl-D-erythritol 2-phosphate is bound by residues 58-60 (DIG), 63-67 (FPDTD), 102-108 (AQAPKMA), 134-137 (TTTE), Phe141, and Arg144.

It belongs to the IspF family. As to quaternary structure, homotrimer. Requires a divalent metal cation as cofactor.

It catalyses the reaction 4-CDP-2-C-methyl-D-erythritol 2-phosphate = 2-C-methyl-D-erythritol 2,4-cyclic diphosphate + CMP. It functions in the pathway isoprenoid biosynthesis; isopentenyl diphosphate biosynthesis via DXP pathway; isopentenyl diphosphate from 1-deoxy-D-xylulose 5-phosphate: step 4/6. Involved in the biosynthesis of isopentenyl diphosphate (IPP) and dimethylallyl diphosphate (DMAPP), two major building blocks of isoprenoid compounds. Catalyzes the conversion of 4-diphosphocytidyl-2-C-methyl-D-erythritol 2-phosphate (CDP-ME2P) to 2-C-methyl-D-erythritol 2,4-cyclodiphosphate (ME-CPP) with a corresponding release of cytidine 5-monophosphate (CMP). The protein is 2-C-methyl-D-erythritol 2,4-cyclodiphosphate synthase of Pseudoalteromonas atlantica (strain T6c / ATCC BAA-1087).